The following is a 232-amino-acid chain: Phosphatidylserine decarboxylase proenzyme (232 aa).

The Schiff-base intermediate with substrate; via pyruvic acid role is filled by S190. S190 is modified (pyruvic acid (Ser); by autocatalysis).

The protein belongs to the phosphatidylserine decarboxylase family. PSD-A subfamily. In terms of assembly, heterodimer of a large membrane-associated beta subunit and a small pyruvoyl-containing alpha subunit. Pyruvate serves as cofactor. Post-translationally, is synthesized initially as an inactive proenzyme. Formation of the active enzyme involves a self-maturation process in which the active site pyruvoyl group is generated from an internal serine residue via an autocatalytic post-translational modification. Two non-identical subunits are generated from the proenzyme in this reaction, and the pyruvate is formed at the N-terminus of the alpha chain, which is derived from the carboxyl end of the proenzyme. The post-translation cleavage follows an unusual pathway, termed non-hydrolytic serinolysis, in which the side chain hydroxyl group of the serine supplies its oxygen atom to form the C-terminus of the beta chain, while the remainder of the serine residue undergoes an oxidative deamination to produce ammonia and the pyruvoyl prosthetic group on the alpha chain.

Its subcellular location is the cell membrane. The enzyme catalyses a 1,2-diacyl-sn-glycero-3-phospho-L-serine + H(+) = a 1,2-diacyl-sn-glycero-3-phosphoethanolamine + CO2. It participates in phospholipid metabolism; phosphatidylethanolamine biosynthesis; phosphatidylethanolamine from CDP-diacylglycerol: step 2/2. Its function is as follows. Catalyzes the formation of phosphatidylethanolamine (PtdEtn) from phosphatidylserine (PtdSer). In Bradyrhizobium diazoefficiens (strain JCM 10833 / BCRC 13528 / IAM 13628 / NBRC 14792 / USDA 110), this protein is Phosphatidylserine decarboxylase proenzyme.